The primary structure comprises 340 residues: MTKITVIGAGSWGTALAMVLADNGHDVRIWGNRPELMNEINTKRENSRYLPGITLPSTIVAYSSLEEALVDVNTVLLVVPTKAYRDVLQEMKEIVTEPITWIHASKGIEPGTSKRISEVIEEEIPESLIKDVVVLSGPSHAEEVGLHQATTVTSAAKRMEAAEGVQDLFMNSYFRVYTNPDIVGVELGGALKNIIALAAGISDGLGLGDNAKAALMTRGLTEIARLGRKMGGNPLTFAGLTGMGDLIVTCTSVHSRNWRAGNMLGKGHSLEEVLESMGMVVEGVRTTKAAHELAEKMEVEMPITAALYDVLFNGNNVKDAVGSLMGRVRKHEVEAIPDLL.

NADPH-binding residues include Ser11, Trp12, Arg33, and Lys106. Lys106, Gly137, and Ser139 together coordinate sn-glycerol 3-phosphate. Position 141 (Ala141) interacts with NADPH. Sn-glycerol 3-phosphate-binding residues include Lys192, Asp245, Ser255, Arg256, and Asn257. Lys192 serves as the catalytic Proton acceptor. NADPH is bound at residue Arg256. Val280 and Glu282 together coordinate NADPH.

Belongs to the NAD-dependent glycerol-3-phosphate dehydrogenase family.

The protein localises to the cytoplasm. It carries out the reaction sn-glycerol 3-phosphate + NAD(+) = dihydroxyacetone phosphate + NADH + H(+). The enzyme catalyses sn-glycerol 3-phosphate + NADP(+) = dihydroxyacetone phosphate + NADPH + H(+). Its pathway is membrane lipid metabolism; glycerophospholipid metabolism. Its function is as follows. Catalyzes the reduction of the glycolytic intermediate dihydroxyacetone phosphate (DHAP) to sn-glycerol 3-phosphate (G3P), the key precursor for phospholipid synthesis. This Bacillus mycoides (strain KBAB4) (Bacillus weihenstephanensis) protein is Glycerol-3-phosphate dehydrogenase [NAD(P)+].